Reading from the N-terminus, the 252-residue chain is Triosephosphate isomerase (252 aa).

10 to 12 (NWK) is a substrate binding site. His96 functions as the Electrophile in the catalytic mechanism. Glu168 acts as the Proton acceptor in catalysis. Residues Gly174, Ser213, and 234–235 (GG) contribute to the substrate site.

Belongs to the triosephosphate isomerase family. Homodimer.

Its subcellular location is the cytoplasm. It carries out the reaction D-glyceraldehyde 3-phosphate = dihydroxyacetone phosphate. Its pathway is carbohydrate biosynthesis; gluconeogenesis. The protein operates within carbohydrate degradation; glycolysis; D-glyceraldehyde 3-phosphate from glycerone phosphate: step 1/1. In terms of biological role, involved in the gluconeogenesis. Catalyzes stereospecifically the conversion of dihydroxyacetone phosphate (DHAP) to D-glyceraldehyde-3-phosphate (G3P). This chain is Triosephosphate isomerase, found in Nitrosomonas eutropha (strain DSM 101675 / C91 / Nm57).